A 400-amino-acid chain; its full sequence is Arrestin, lateral eye (400 aa).

Belongs to the arrestin family. Phosphorylated.

Its function is as follows. Plays an important role in the photoreceptor transduction. This Limulus polyphemus (Atlantic horseshoe crab) protein is Arrestin, lateral eye.